Reading from the N-terminus, the 275-residue chain is Elongation factor Ts (275 aa).

The tract at residues threonine 76–valine 79 is involved in Mg(2+) ion dislocation from EF-Tu.

Belongs to the EF-Ts family.

It is found in the cytoplasm. In terms of biological role, associates with the EF-Tu.GDP complex and induces the exchange of GDP to GTP. It remains bound to the aminoacyl-tRNA.EF-Tu.GTP complex up to the GTP hydrolysis stage on the ribosome. This is Elongation factor Ts from Salinispora tropica (strain ATCC BAA-916 / DSM 44818 / JCM 13857 / NBRC 105044 / CNB-440).